A 58-amino-acid chain; its full sequence is uncharacterized protein (58 aa).

Residues 3-52 adopt a coiled-coil conformation; it reads KVILEHLQRIEKQLEILNSKIENFLGFEELSEEELKELDEIEAKMEKGEK.

This is an uncharacterized protein from Archaeoglobus fulgidus (strain ATCC 49558 / DSM 4304 / JCM 9628 / NBRC 100126 / VC-16).